Here is a 332-residue protein sequence, read N- to C-terminus: Phosphate acyltransferase (332 aa).

It belongs to the PlsX family. In terms of assembly, homodimer. Probably interacts with PlsY.

It localises to the cytoplasm. It catalyses the reaction a fatty acyl-[ACP] + phosphate = an acyl phosphate + holo-[ACP]. The protein operates within lipid metabolism; phospholipid metabolism. Catalyzes the reversible formation of acyl-phosphate (acyl-PO(4)) from acyl-[acyl-carrier-protein] (acyl-ACP). This enzyme utilizes acyl-ACP as fatty acyl donor, but not acyl-CoA. This chain is Phosphate acyltransferase, found in Oceanobacillus iheyensis (strain DSM 14371 / CIP 107618 / JCM 11309 / KCTC 3954 / HTE831).